The primary structure comprises 257 residues: Tryptophan synthase alpha chain (257 aa).

Catalysis depends on proton acceptor residues Glu-44 and Asp-55.

This sequence belongs to the TrpA family. In terms of assembly, tetramer of two alpha and two beta chains.

The catalysed reaction is (1S,2R)-1-C-(indol-3-yl)glycerol 3-phosphate + L-serine = D-glyceraldehyde 3-phosphate + L-tryptophan + H2O. The protein operates within amino-acid biosynthesis; L-tryptophan biosynthesis; L-tryptophan from chorismate: step 5/5. In terms of biological role, the alpha subunit is responsible for the aldol cleavage of indoleglycerol phosphate to indole and glyceraldehyde 3-phosphate. This chain is Tryptophan synthase alpha chain, found in Chlamydia caviae (strain ATCC VR-813 / DSM 19441 / 03DC25 / GPIC) (Chlamydophila caviae).